Reading from the N-terminus, the 293-residue chain is Diaminopimelate epimerase (293 aa).

3 residues coordinate substrate: Asn-13, Gln-46, and Asn-66. Cys-75 functions as the Proton donor in the catalytic mechanism. Residues Gly-76–Asn-77, Asn-162, Asn-195, and Glu-213–Arg-214 each bind substrate. Cys-222 functions as the Proton acceptor in the catalytic mechanism. Gly-223–Thr-224 contributes to the substrate binding site.

The protein belongs to the diaminopimelate epimerase family. As to quaternary structure, homodimer.

The protein resides in the cytoplasm. The catalysed reaction is (2S,6S)-2,6-diaminopimelate = meso-2,6-diaminopimelate. It participates in amino-acid biosynthesis; L-lysine biosynthesis via DAP pathway; DL-2,6-diaminopimelate from LL-2,6-diaminopimelate: step 1/1. Catalyzes the stereoinversion of LL-2,6-diaminopimelate (L,L-DAP) to meso-diaminopimelate (meso-DAP), a precursor of L-lysine and an essential component of the bacterial peptidoglycan. The protein is Diaminopimelate epimerase of Psychrobacter sp. (strain PRwf-1).